Consider the following 134-residue polypeptide: Early E3B 14.5 kDa protein (134 aa).

A signal peptide spans 1-21; the sequence is MQAMLPVILILLLPCIPLAST. Residues 54 to 78 traverse the membrane as a helical segment; the sequence is YWIVIVGIINILSCTFFSITIYPTF.

This sequence belongs to the adenoviridae E3_14 family. Phosphorylated on serine; O-glycosylated, but not N-glycosylated.

It is found in the host membrane. In terms of biological role, down-regulates the EGF receptor and prevents cytolysis by TNF. In Homo sapiens (Human), this protein is Early E3B 14.5 kDa protein.